The sequence spans 120 residues: NAD(P)H-quinone oxidoreductase subunit 3 (120 aa).

Helical transmembrane passes span 6 to 26 (GYDA…LALI), 64 to 84 (MFAL…PWAV), and 89 to 109 (LGVL…VALA).

This sequence belongs to the complex I subunit 3 family. In terms of assembly, NDH-1 can be composed of about 15 different subunits; different subcomplexes with different compositions have been identified which probably have different functions.

It localises to the cellular thylakoid membrane. It carries out the reaction a plastoquinone + NADH + (n+1) H(+)(in) = a plastoquinol + NAD(+) + n H(+)(out). The catalysed reaction is a plastoquinone + NADPH + (n+1) H(+)(in) = a plastoquinol + NADP(+) + n H(+)(out). In terms of biological role, NDH-1 shuttles electrons from an unknown electron donor, via FMN and iron-sulfur (Fe-S) centers, to quinones in the respiratory and/or the photosynthetic chain. The immediate electron acceptor for the enzyme in this species is believed to be plastoquinone. Couples the redox reaction to proton translocation, and thus conserves the redox energy in a proton gradient. Cyanobacterial NDH-1 also plays a role in inorganic carbon-concentration. In Parasynechococcus marenigrum (strain WH8102), this protein is NAD(P)H-quinone oxidoreductase subunit 3.